The following is a 107-amino-acid chain: Early E3A 12.5 kDa protein (107 aa).

The protein belongs to the adenoviridae E3A-2 family.

This Homo sapiens (Human) protein is Early E3A 12.5 kDa protein.